A 97-amino-acid polypeptide reads, in one-letter code: Vitelline membrane protein 15a-2 (97 aa).

A signal peptide spans 1 to 19 (MNKIIAALVLFTAVIGALA). The tract at residues 20-23 (DYPA) is required for binding to the gut receptor. The segment at 26-46 (PPPPKPYHAPPPPPYHAPPHH) is disordered. Residues 61–97 (KAPAAKCGANLLVGCAPSVAHVPCVPVHPHPPPPAHY) form the VM domain.

It belongs to the vitelline membrane protein family. As to expression, expressed in the anterior region of the follicle cells.

The protein resides in the secreted. Its function is as follows. Has an oostatic activity. Inhibits trypsin biosynthesis in the midgut epithelial cells which indirectly reduces the vitellogenin concentration in the hemolymph resulting in inhibition of oocyte development. This Aedes aegypti (Yellowfever mosquito) protein is Vitelline membrane protein 15a-2 (15a-2).